We begin with the raw amino-acid sequence, 752 residues long: Lid2 complex component jmj3 (752 aa).

A JmjN domain is found at 34–75 (IPVVEPKISEFVDMESFIRRVERLGKKYGAIKVVRPSSVLNP). The JmjC domain occupies 162–333 (YTNRPSIPFY…NYEFSNLRRL (172 aa)). Composition is skewed to polar residues over residues 391 to 402 (SFSQRDFDSPNS) and 409 to 423 (LMSN…HFNS). The segment at 391–438 (SFSQRDFDSPNSINPPSPLMSNHESASTEHFNSTTTTEKELSSLHVGE) is disordered. Positions 427 to 438 (TEKELSSLHVGE) are enriched in basic and acidic residues.

In terms of assembly, component of the Lid2 complex composed of ash2, jmj3, lid2, sdc1 and snt2.

Its subcellular location is the nucleus. The chain is Lid2 complex component jmj3 from Schizosaccharomyces pombe (strain 972 / ATCC 24843) (Fission yeast).